The following is a 126-amino-acid chain: Large ribosomal subunit protein eL32 (126 aa).

Belongs to the eukaryotic ribosomal protein eL32 family. In terms of assembly, part of the 50S ribosomal subunit.

This is Large ribosomal subunit protein eL32 (rpl32e) from Thermococcus kodakarensis (strain ATCC BAA-918 / JCM 12380 / KOD1) (Pyrococcus kodakaraensis (strain KOD1)).